Here is a 111-residue protein sequence, read N- to C-terminus: ATP-dependent Clp protease adapter protein ClpS (111 aa).

It belongs to the ClpS family. In terms of assembly, binds to the N-terminal domain of the chaperone ClpA.

In terms of biological role, involved in the modulation of the specificity of the ClpAP-mediated ATP-dependent protein degradation. The chain is ATP-dependent Clp protease adapter protein ClpS from Legionella pneumophila (strain Corby).